Consider the following 186-residue polypeptide: Large ribosomal subunit protein eL18 (186 aa).

Belongs to the eukaryotic ribosomal protein eL18 family. As to quaternary structure, component of the large ribosomal subunit. Mature ribosomes consist of a small (40S) and a large (60S) subunit. The 40S subunit contains about 32 different proteins and 1 molecule of RNA (18S). The 60S subunit contains 45 different proteins and 3 molecules of RNA (25S, 5.8S and 5S).

The protein localises to the cytoplasm. Its function is as follows. Component of the ribosome, a large ribonucleoprotein complex responsible for the synthesis of proteins in the cell. The small ribosomal subunit (SSU) binds messenger RNAs (mRNAs) and translates the encoded message by selecting cognate aminoacyl-transfer RNA (tRNA) molecules. The large subunit (LSU) contains the ribosomal catalytic site termed the peptidyl transferase center (PTC), which catalyzes the formation of peptide bonds, thereby polymerizing the amino acids delivered by tRNAs into a polypeptide chain. The nascent polypeptides leave the ribosome through a tunnel in the LSU and interact with protein factors that function in enzymatic processing, targeting, and the membrane insertion of nascent chains at the exit of the ribosomal tunnel. The sequence is that of Large ribosomal subunit protein eL18 from Candida albicans (strain SC5314 / ATCC MYA-2876) (Yeast).